Consider the following 623-residue polypeptide: Quinoprotein ethanol dehydrogenase (623 aa).

Positions 1 to 34 are cleaved as a signal peptide; it reads MTTRTSPAPAGLLRPSLHCLAFAVALGSAGAALA. D45, T48, and D51 together coordinate Ca(2+). Pyrroloquinoline quinone is bound at residue E95. C139 and C140 are joined by a disulfide. Pyrroloquinoline quinone-binding positions include R145, T189, and 207 to 209; that span reads HGS. Ca(2+) is bound at residue E213. Residues 244–281 form a disordered region; sequence LNGKDSTVTGDVKAPSWPDDRNSPTGKVESWSHGGGAP. Ca(2+) is bound by residues N300 and D350. The active-site Proton acceptor is D350. Position 378 (R378) interacts with pyrroloquinoline quinone. The disordered stretch occupies residues 413–434; that stretch reads GRPVEREGQRPPLPEPGQKHGK. W523 and A587 together coordinate pyrroloquinoline quinone.

Belongs to the bacterial PQQ dehydrogenase family. As to quaternary structure, homodimer. Interacts with cytochrome c550. Pyrroloquinoline quinone serves as cofactor. The cofactor is Ca(2+). The disulfide ring formed between the two adjacent cysteine residues Cys-139 and Cys-140 is essential for efficient electron transfer at pH 7 from QEDH to its natural electron acceptor cytochrome c550.

It localises to the periplasm. It carries out the reaction a primary alcohol + 2 Fe(III)-[cytochrome c] = an aldehyde + 2 Fe(II)-[cytochrome c] + 2 H(+). The enzyme catalyses ethanol + 2 Fe(III)-[cytochrome c] = acetaldehyde + 2 Fe(II)-[cytochrome c] + 2 H(+). The catalysed reaction is butan-1-ol + 2 Fe(III)-[cytochrome c] = butanal + 2 Fe(II)-[cytochrome c] + 2 H(+). It catalyses the reaction propan-2-ol + 2 Fe(III)-[cytochrome c] = acetone + 2 Fe(II)-[cytochrome c] + 2 H(+). It carries out the reaction 1-propanol + 2 Fe(III)-[cytochrome c] = propanal + 2 Fe(II)-[cytochrome c] + 2 H(+). It functions in the pathway alcohol metabolism; ethanol degradation; acetate from ethanol: step 1/2. With respect to regulation, inhibited by cyclopropanone ethylhemiketal. Activated by ammonia (500mM), methylamine (5mM), ethylamine (5mM), octylamine (5mM), ethanolamine (5mM) and 1-amino-2-propanol (5mM), in assays using artificial electron acceptors. Ammonia is not needed for, nor does it stimulate, the ethanol-oxidizing activity when using the natural electron acceptor cytochrome c550. Catalyzes the oxidation of ethanol and other primary alcohols to the corresponding aldehydes, except methanol, which is a very poor substrate. Uses a specific inducible cytochrome c550, encoded by the adjacent gene in the locus, as electron acceptor. Is a key enzyme of the carbon and energy metabolism during growth of P.aeruginosa on ethanol as the sole carbon and energy source. Is also able to use secondary alcohols as well as aminoalcohols like ethanolamine and 1-amino-2-propanol, and aldehydes as substrates. This chain is Quinoprotein ethanol dehydrogenase, found in Pseudomonas aeruginosa (strain ATCC 15692 / DSM 22644 / CIP 104116 / JCM 14847 / LMG 12228 / 1C / PRS 101 / PAO1).